Consider the following 137-residue polypeptide: Large ribosomal subunit protein uL16 (137 aa).

The protein belongs to the universal ribosomal protein uL16 family. As to quaternary structure, part of the 50S ribosomal subunit.

Functionally, binds 23S rRNA and is also seen to make contacts with the A and possibly P site tRNAs. The chain is Large ribosomal subunit protein uL16 from Coxiella burnetii (strain RSA 331 / Henzerling II).